A 67-amino-acid polypeptide reads, in one-letter code: ATP synthase F(0) complex subunit 8 (67 aa).

The helical transmembrane segment at Thr-8–Phe-24 threads the bilayer. Residue Lys-54 is modified to N6-acetyllysine; alternate. At Lys-54 the chain carries N6-succinyllysine; alternate. Lys-57 carries the N6-acetyllysine modification.

Belongs to the ATPase protein 8 family. In terms of assembly, component of the ATP synthase complex composed at least of ATP5F1A/subunit alpha, ATP5F1B/subunit beta, ATP5MC1/subunit c (homooctomer), MT-ATP6/subunit a, MT-ATP8/subunit 8, ATP5ME/subunit e, ATP5MF/subunit f, ATP5MG/subunit g, ATP5MK/subunit k, ATP5MJ/subunit j, ATP5F1C/subunit gamma, ATP5F1D/subunit delta, ATP5F1E/subunit epsilon, ATP5PF/subunit F6, ATP5PB/subunit b, ATP5PD/subunit d, ATP5PO/subunit OSCP. ATP synthase complex consists of a soluble F(1) head domain (subunits alpha(3) and beta(3)) - the catalytic core - and a membrane F(0) domain - the membrane proton channel (subunits c, a, 8, e, f, g, k and j). These two domains are linked by a central stalk (subunits gamma, delta, and epsilon) rotating inside the F1 region and a stationary peripheral stalk (subunits F6, b, d, and OSCP). Interacts with PRICKLE3.

It localises to the mitochondrion membrane. Its function is as follows. Subunit 8, of the mitochondrial membrane ATP synthase complex (F(1)F(0) ATP synthase or Complex V) that produces ATP from ADP in the presence of a proton gradient across the membrane which is generated by electron transport complexes of the respiratory chain. ATP synthase complex consist of a soluble F(1) head domain - the catalytic core - and a membrane F(1) domain - the membrane proton channel. These two domains are linked by a central stalk rotating inside the F(1) region and a stationary peripheral stalk. During catalysis, ATP synthesis in the catalytic domain of F(1) is coupled via a rotary mechanism of the central stalk subunits to proton translocation. In vivo, can only synthesize ATP although its ATP hydrolase activity can be activated artificially in vitro. Part of the complex F(0) domain. The chain is ATP synthase F(0) complex subunit 8 from Talpa europaea (European mole).